Consider the following 366-residue polypeptide: Glutamate 5-kinase (366 aa).

Residue Lys-17 coordinates ATP. Residues Ser-57, Asp-144, and Asn-156 each coordinate substrate. ATP-binding positions include 176–177 (SD) and 216–222 (TGGMASK). Residues 278-352 (RGALVLDDGA…GRSTTELPDT (75 aa)) enclose the PUA domain.

This sequence belongs to the glutamate 5-kinase family.

The protein localises to the cytoplasm. It catalyses the reaction L-glutamate + ATP = L-glutamyl 5-phosphate + ADP. Its pathway is amino-acid biosynthesis; L-proline biosynthesis; L-glutamate 5-semialdehyde from L-glutamate: step 1/2. Catalyzes the transfer of a phosphate group to glutamate to form L-glutamate 5-phosphate. This Nocardia farcinica (strain IFM 10152) protein is Glutamate 5-kinase.